Here is a 335-residue protein sequence, read N- to C-terminus: Zinc finger protein 396 (335 aa).

The 83-residue stretch at R52–L134 folds into the SCAN box domain. 3 C2H2-type zinc fingers span residues Q251–H273, Y279–H301, and Y307–H329.

It belongs to the krueppel C2H2-type zinc-finger protein family. As to quaternary structure, isoforms 1 and 2 can both homo- and hetero-associate. Expressed strongly in liver, moderately in skeletal muscle and weakly in kidney, pancreas, spleen and prostate.

The protein resides in the nucleus. The protein localises to the cytoplasm. Isoform 1 and isoform 2 act as DNA-dependent transcriptional repressors. In Homo sapiens (Human), this protein is Zinc finger protein 396 (ZNF396).